We begin with the raw amino-acid sequence, 844 residues long: Meiosis-specific protein PAIR3 (844 aa).

Disordered stretches follow at residues 41–389 (TSSV…RERR), 418–506 (KLSS…RFSD), 532–604 (DDLF…QISI), and 616–669 (WLSD…EPEK). Polar residues predominate over residues 106 to 120 (QPDDNAIEQTGTFSF). Basic and acidic residues-rich tracts occupy residues 122-134 (TRRE…DQLD) and 145-164 (RQVE…RMKL). Composition is skewed to polar residues over residues 191–208 (QPKS…QKVF) and 218–229 (TPAQFNSQTANK). Composition is skewed to basic and acidic residues over residues 256 to 270 (RKKE…DKSG) and 324 to 363 (AKVE…KGEK). 2 stretches are compositionally biased toward polar residues: residues 364-382 (TNSF…SCSR) and 420-440 (SSPQ…SPQQ). Positions 441-456 (KENDNTHIPEASDRTA) are enriched in basic and acidic residues. Over residues 459–473 (NSFNSTPSPAANPSP) the composition is skewed to low complexity. Residues 545–554 (RSRSTSFTSD) show a composition bias toward polar residues. The segment covering 616-640 (WLSDVDSPDKSSIEHLGRKSHLKEG) has biased composition (basic and acidic residues). Positions 646-661 (QLTSPTHFATSGTQET) are enriched in polar residues. Positions 731–765 (VNAGKSKRKRLESTFEEQQEKLRILHEKFKEEVNQ) form a coiled coil.

In terms of tissue distribution, expressed in pollen mother cells and the ovule tissues during meiosis.

Its subcellular location is the chromosome. It is found in the nucleus. In terms of biological role, plays a crucial role in homologous chromosome pairing and synapsis in meiosis. Does not seem required for cytokinesis. Is essential for meiotic bouquet formation, homologous chromosome pairing and normal recombination, and synaptonemal complex (SC) assembly. Required for the proper association of PAIR2 with chromosomes. The polypeptide is Meiosis-specific protein PAIR3 (Oryza sativa subsp. japonica (Rice)).